A 374-amino-acid chain; its full sequence is Type II methyltransferase M.BbvI (374 aa).

The SAM-dependent MTase C5-type domain occupies 3 to 347 (FRKGELFCGP…EAVLKTFARI (345 aa)). The active site involves C92.

The protein belongs to the class I-like SAM-binding methyltransferase superfamily. C5-methyltransferase family.

It carries out the reaction a 2'-deoxycytidine in DNA + S-adenosyl-L-methionine = a 5-methyl-2'-deoxycytidine in DNA + S-adenosyl-L-homocysteine + H(+). Functionally, a methylase, recognizes the double-stranded sequence 5'-GCAGC-3', methylates C-2 on both strands, and protects the DNA from cleavage by the BbvI endonuclease. This chain is Type II methyltransferase M.BbvI (bbvIM), found in Brevibacillus brevis (Bacillus brevis).